A 655-amino-acid polypeptide reads, in one-letter code: Epithelial sodium channel subunit gamma (655 aa).

Residues 1-55 are Cytoplasmic-facing; sequence MAPGEKIKAKIKKNLPVRGPQAPTIKDLMHWYCLNTNTHGCRRIVVSRGRLRRLL. Residues 56–76 form a helical membrane-spanning segment; that stretch reads WIAFTLTAVALIIWQCALLVF. Residues 77-547 lie on the Extracellular side of the membrane; it reads SFYTVSVSIK…GGQLGLWMSC (471 aa). 8 disulfides stabilise this stretch: Cys100–Cys289, Cys213–Cys220, Cys266–Cys273, Cys378–Cys463, Cys400–Cys459, Cys404–Cys455, Cys413–Cys440, and Cys415–Cys429. Residues 140–227 form a gating release of inhibition by proteolysis (GRIP); protease-sensitive region that is responsible for the proteolytic activation of the channel region; sequence RKRREAGSMR…SDCATYTFSS (88 aa). Asn215 carries an N-linked (GlcNAc...) asparagine glycan. N-linked (GlcNAc...) asparagine glycosylation occurs at Asn277. An N-linked (GlcNAc...) asparagine glycan is attached at Asn503. The chain crosses the membrane as a helical span at residues 548 to 568; it reads SVVCVIEIIEVFFIDFFSIIA. At 569–655 the chain is on the cytoplasmic side; that stretch reads RRQWQKAKDW…LTDTQLTNEF (87 aa). Residues 582 to 636 are disordered; the sequence is RRTPPSTETPSSQQGQDNPALDTDDDLPTFTSAMRLPPAPEAPVPGTPPPRYNTL. Residues 585–598 are compositionally biased toward polar residues; that stretch reads PPSTETPSSQQGQD. The span at 618 to 632 shows a compositional bias: pro residues; sequence PPAPEAPVPGTPPPR. The PY motif; recruits WW domain-containing proteins and is thereby required for ubiquitination and inhibition of the channel by NEDD4 and NEDD4L signature appears at 629–633; it reads PPPRY.

The protein belongs to the amiloride-sensitive sodium channel (TC 1.A.6) family. SCNN1G subfamily. In terms of assembly, component of the heterotrimeric epithelial sodium channel (ENaC) composed of an alpha/SCNN1A, a beta/SCNN1B and a gamma/SCNN1G subunit. Interacts with WWP1 (via WW domains). Interacts with WWP2 (via WW domains); inhibits the channel. Interacts with the full-length immature form of PCSK9 (pro-PCSK9); inhibits ENaC by promoting its proteasomal degradation. Interacts with BPIFA1; the interaction is indirect via SCNN1B and inhibits the proteolytic maturation of SCNN1A and SCNN1G and the activation of ENaC. Post-translationally, phosphorylated on serine and threonine residues. Aldosterone and insulin increase the basal level of phosphorylation. Ubiquitinated. Can be ubiquitinated at multiple sites and undergo monoubiquitination and polyubiquitination. Ubiquitination by NEDD4 or NEDD4L inhibits the ENaC channel through endocytosis, intracellular retention and degradation of its individual subunits. In terms of processing, ENaC is activated through the proteolytic maturation of its subunits. Furin cleaves the SCNN1G subunit first, followed by cleavage by prostasin (PRSS8), which results in a stepwise increase in the open probability of the channel due to the release of an inhibitory tract. BPIFA1, which is recruited by the SCNN1B subunit, prevents the proteolytic activation of ENaC. Post-translationally, N-glycosylated. N-linked glycans are processed to complex type during ENaC complex assembly and transport to the plasma membrane. In terms of tissue distribution, lung and kidney.

The protein resides in the apical cell membrane. It catalyses the reaction Na(+)(in) = Na(+)(out). With respect to regulation, originally identified and characterized by its inhibition by the diuretic drug amiloride. This is one of the three pore-forming subunits of the heterotrimeric epithelial sodium channel (ENaC), a critical regulator of sodium balance and fluid homeostasis. ENaC operates in epithelial tissues, where it mediates the electrodiffusion of sodium ions from extracellular fluid through the apical membrane of cells, with water following osmotically. It plays a key role in maintaining sodium homeostasis through electrogenic sodium reabsorption in the kidneys. Additionally, ENaC is essential for airway surface liquid homeostasis, which is crucial for proper mucus clearance. The chain is Epithelial sodium channel subunit gamma from Mus musculus (Mouse).